Consider the following 448-residue polypeptide: Tryptophan dimethylallyltransferase 1 (448 aa).

L-tryptophan contacts are provided by residues I80 to L81 and E89. Residues R100, K186, and Y188 each coordinate substrate. Residues Y190 and R249 each contribute to the L-tryptophan site. 7 residues coordinate substrate: R262, K264, Y266, Q348, Y350, Y414, and Y418.

It belongs to the tryptophan dimethylallyltransferase family. Homodimer.

It carries out the reaction L-tryptophan + dimethylallyl diphosphate = 4-(3-methylbut-2-enyl)-L-tryptophan + diphosphate. It functions in the pathway alkaloid biosynthesis; ergot alkaloid biosynthesis. In terms of biological role, tryptophan dimethylallyltransferase; part of the gene cluster that mediates the biosynthesis of fungal ergot alkaloid. DmaW catalyzes the first step of ergot alkaloid biosynthesis by condensing dimethylallyl diphosphate (DMAP) and tryptophan to form 4-dimethylallyl-L-tryptophan. The second step is catalyzed by the methyltransferase easF that methylates 4-dimethylallyl-L-tryptophan in the presence of S-adenosyl-L-methionine, resulting in the formation of 4-dimethylallyl-L-abrine. The catalase easC and the FAD-dependent oxidoreductase easE then transform 4-dimethylallyl-L-abrine to chanoclavine-I which is further oxidized by easD in the presence of NAD(+), resulting in the formation of chanoclavine-I aldehyde. Agroclavine dehydrogenase easG then mediates the conversion of chanoclavine-I aldehyde to agroclavine via a non-enzymatic adduct reaction: the substrate is an iminium intermediate that is formed spontaneously from chanoclavine-I aldehyde in the presence of glutathione. The presence of easA is not required to complete this reaction. Further conversion of agroclavine to paspalic acid is a two-step process involving oxidation of agroclavine to elymoclavine and of elymoclavine to paspalic acid, the second step being performed by the elymoclavine oxidase cloA. Paspalic acid is then further converted to D-lysergic acid. Ergopeptines are assembled from D-lysergic acid and three different amino acids by the D-lysergyl-peptide-synthetases composed each of a monomudular and a trimodular nonribosomal peptide synthetase subunit. LpsB and lpsC encode the monomodular subunits responsible for D-lysergic acid activation and incorporation into the ergopeptine backbone. LpsA1 and A2 subunits encode the trimodular nonribosomal peptide synthetase assembling the tripeptide portion of ergopeptines. LpsA1 is responsible for formation of the major ergopeptine, ergotamine, and lpsA2 for alpha-ergocryptine, the minor ergopeptine of the total alkaloid mixture elaborated by C.purpurea. D-lysergyl-tripeptides are assembled by the nonribosomal peptide synthetases and released as N-(D-lysergyl-aminoacyl)-lactams. Cyclolization of the D-lysergyl-tripeptides is performed by the Fe(2+)/2-ketoglutarate-dependent dioxygenase easH which introduces a hydroxyl group into N-(D-lysergyl-aminoacyl)-lactam at alpha-C of the aminoacyl residue followed by spontaneous condensation with the terminal lactam carbonyl group. The chain is Tryptophan dimethylallyltransferase 1 from Claviceps purpurea (Ergot fungus).